A 378-amino-acid polypeptide reads, in one-letter code: Probable endopolygalacturonase E (378 aa).

An N-terminal signal peptide occupies residues 1-19 (MVTSSSVIVLTLWAALVSA). The propeptide occupies 20 to 38 (SPVADPLVTPAPKLEDLEK). The cysteines at positions 43 and 61 are disulfide-linked. PbH1 repeat units lie at residues 103-125 (GPLVSVSGTDITVTGADGAYLNG), 174-204 (STYLTMEDITIDNTDGDDGEAANTDGFDIGD), and 205-226 (STYITITGANVYNQDDCVAVNS). Residue Asp219 is the Proton donor of the active site. An intrachain disulfide couples Cys221 to Cys237. Residue His241 is part of the active site. PbH1 repeat units lie at residues 256-277 (VKNVTFYDSEIKSSQNGVRIKT), 285-307 (VSEVTYKEITLSDITDYGIVVEQ), and 317-345 (TDGITIEDFVLDNVQGSVESSGTNIYIVC). Asn258 carries an N-linked (GlcNAc...) asparagine glycan. Disulfide bonds link Cys345-Cys350 and Cys369-Cys378.

It belongs to the glycosyl hydrolase 28 family.

It localises to the secreted. The enzyme catalyses (1,4-alpha-D-galacturonosyl)n+m + H2O = (1,4-alpha-D-galacturonosyl)n + (1,4-alpha-D-galacturonosyl)m.. Its function is as follows. Involved in maceration and soft-rotting of plant tissue. Hydrolyzes the 1,4-alpha glycosidic bonds of de-esterified pectate in the smooth region of the plant cell wall. This is Probable endopolygalacturonase E (pgaE) from Aspergillus niger (strain ATCC MYA-4892 / CBS 513.88 / FGSC A1513).